Here is a 457-residue protein sequence, read N- to C-terminus: MSKRYAVVLAAGQGTRMKSKLYKVLHPVCGKPMVEHVVDQISTLDVDKVVTIVGHGAEKVQEHLAGKSEFVKQDEQLGTAHAVLQAKSELAGKDGVTLVVCGDTPLIEASTMEALLKYHHEKRAKATILTTVIEDPTGYGRIIRDDLGIVEKIVEHKDATEKEQRISEINTGTYCFDNKALFEALENVSNDNVQGEYYLPDVIKILKDADEVVAAYKMESFEESLGVNDRIALAEASKLMQRRINENHMRNGVTLVNPENTYIDIDVKIGQDTVIEPGVMLRGKTVIGDDCVVTSGSEIVSSVIGERVHVRNSSIFESKVGDDVQIGPYAHLRPESDIHNHVKIGNYVETKKAVVGEGTKLPHFIYMGDAEIGKNVNVGCGSIAVNYDGKNKAKTIIGDNVFVGCNSNLIAPVKVGDRAFIAAGSTITKDVPEDALGIARAKQDNKLGYAKHLNHGK.

The interval 1–230 is pyrophosphorylase; that stretch reads MSKRYAVVLA…FEESLGVNDR (230 aa). UDP-N-acetyl-alpha-D-glucosamine contacts are provided by residues 9-12, K23, Q73, and 78-79; these read LAAG and GT. D103 contacts Mg(2+). Positions 140, 155, 170, and 228 each coordinate UDP-N-acetyl-alpha-D-glucosamine. N228 serves as a coordination point for Mg(2+). Residues 231–251 form a linker region; sequence IALAEASKLMQRRINENHMRN. Positions 252-457 are N-acetyltransferase; the sequence is GVTLVNPENT…GYAKHLNHGK (206 aa). UDP-N-acetyl-alpha-D-glucosamine is bound by residues R333 and K351. H363 acts as the Proton acceptor in catalysis. Residues Y366 and N377 each contribute to the UDP-N-acetyl-alpha-D-glucosamine site. Acetyl-CoA contacts are provided by residues 386-387, A423, and R440; that span reads NY.

The protein in the N-terminal section; belongs to the N-acetylglucosamine-1-phosphate uridyltransferase family. In the C-terminal section; belongs to the transferase hexapeptide repeat family. As to quaternary structure, homotrimer. It depends on Mg(2+) as a cofactor.

The protein localises to the cytoplasm. The catalysed reaction is alpha-D-glucosamine 1-phosphate + acetyl-CoA = N-acetyl-alpha-D-glucosamine 1-phosphate + CoA + H(+). The enzyme catalyses N-acetyl-alpha-D-glucosamine 1-phosphate + UTP + H(+) = UDP-N-acetyl-alpha-D-glucosamine + diphosphate. It functions in the pathway nucleotide-sugar biosynthesis; UDP-N-acetyl-alpha-D-glucosamine biosynthesis; N-acetyl-alpha-D-glucosamine 1-phosphate from alpha-D-glucosamine 6-phosphate (route II): step 2/2. It participates in nucleotide-sugar biosynthesis; UDP-N-acetyl-alpha-D-glucosamine biosynthesis; UDP-N-acetyl-alpha-D-glucosamine from N-acetyl-alpha-D-glucosamine 1-phosphate: step 1/1. Its pathway is bacterial outer membrane biogenesis; LPS lipid A biosynthesis. Catalyzes the last two sequential reactions in the de novo biosynthetic pathway for UDP-N-acetylglucosamine (UDP-GlcNAc). The C-terminal domain catalyzes the transfer of acetyl group from acetyl coenzyme A to glucosamine-1-phosphate (GlcN-1-P) to produce N-acetylglucosamine-1-phosphate (GlcNAc-1-P), which is converted into UDP-GlcNAc by the transfer of uridine 5-monophosphate (from uridine 5-triphosphate), a reaction catalyzed by the N-terminal domain. This is Bifunctional protein GlmU from Listeria innocua serovar 6a (strain ATCC BAA-680 / CLIP 11262).